The sequence spans 120 residues: NAD(P)H-quinone oxidoreductase subunit 3 (120 aa).

Transmembrane regions (helical) follow at residues 1 to 21, 64 to 84, and 89 to 109; these read MFVLSGYEYLLGFLIICSLVP, MFALVFVVFDVETVFLYPWAV, and LGLLAFIEALIFIAILVVALV.

It belongs to the complex I subunit 3 family. In terms of assembly, NDH-1 can be composed of about 15 different subunits; different subcomplexes with different compositions have been identified which probably have different functions.

The protein localises to the cellular thylakoid membrane. The enzyme catalyses a plastoquinone + NADH + (n+1) H(+)(in) = a plastoquinol + NAD(+) + n H(+)(out). It catalyses the reaction a plastoquinone + NADPH + (n+1) H(+)(in) = a plastoquinol + NADP(+) + n H(+)(out). In terms of biological role, NDH-1 shuttles electrons from an unknown electron donor, via FMN and iron-sulfur (Fe-S) centers, to quinones in the respiratory and/or the photosynthetic chain. The immediate electron acceptor for the enzyme in this species is believed to be plastoquinone. Couples the redox reaction to proton translocation, and thus conserves the redox energy in a proton gradient. Cyanobacterial NDH-1 also plays a role in inorganic carbon-concentration. The polypeptide is NAD(P)H-quinone oxidoreductase subunit 3 (Trichormus variabilis (strain ATCC 29413 / PCC 7937) (Anabaena variabilis)).